Here is a 98-residue protein sequence, read N- to C-terminus: UPF0235 protein Mmc1_3654 (98 aa).

Belongs to the UPF0235 family.

This chain is UPF0235 protein Mmc1_3654, found in Magnetococcus marinus (strain ATCC BAA-1437 / JCM 17883 / MC-1).